We begin with the raw amino-acid sequence, 666 residues long: DNA mismatch repair protein MutL (666 aa).

The protein belongs to the DNA mismatch repair MutL/HexB family.

In terms of biological role, this protein is involved in the repair of mismatches in DNA. It is required for dam-dependent methyl-directed DNA mismatch repair. May act as a 'molecular matchmaker', a protein that promotes the formation of a stable complex between two or more DNA-binding proteins in an ATP-dependent manner without itself being part of a final effector complex. This is DNA mismatch repair protein MutL from Clostridium botulinum (strain Loch Maree / Type A3).